The sequence spans 771 residues: DNA helicase/primase complex-associated protein (771 aa).

It belongs to the herpesviridae HEPA family. In terms of assembly, associates with the primase and the helicase to form the helicase-primase complex. Interacts with the origin-binding protein. Interacts with the polymerase catalytic subunit.

Its subcellular location is the host nucleus. Its function is as follows. Component of the helicase/primase complex. Unwinds the DNA at the replication forks and generates single-stranded DNA for both leading and lagging strand synthesis. The primase synthesizes short RNA primers on the lagging strand that the polymerase presumably elongates using dNTPs. The primase-associated factor has no known catalytic activity in the complex and may serve to facilitate the formation of the replisome by directly interacting with the origin-binding protein and the polymerase. The protein is DNA helicase/primase complex-associated protein of Varicella-zoster virus (strain Oka vaccine) (HHV-3).